Here is a 204-residue protein sequence, read N- to C-terminus: Terpene cyclase ausL (204 aa).

Transmembrane regions (helical) follow at residues 19-39 (LSEM…LAMV), 49-69 (AIAV…AWIY), 75-95 (HWQG…AATL), 114-134 (LVLL…CLAL), and 138-158 (GALG…SAAV).

It belongs to the paxB family.

Its subcellular location is the membrane. Its pathway is secondary metabolite biosynthesis; terpenoid biosynthesis. Functionally, terpene cyclase; part of the gene cluster B that mediates the biosynthesis of austinol and dehydroaustinol, two fungal meroterpenoids. The first step of the pathway is the synthesis of 3,5-dimethylorsellinic acid by the polyketide synthase ausA. 3,5-dimethylorsellinic acid is then prenylated by the polyprenyl transferase ausN. Further epoxidation by the FAD-dependent monooxygenase ausM and cyclization by the probable terpene cyclase ausL lead to the formation of protoaustinoid A. Protoaustinoid A is then oxidized to spiro-lactone preaustinoid A3 by the combined action of the FAD-binding monooxygenases ausB and ausC, and the dioxygenase ausE. Acid-catalyzed keto-rearrangement and ring contraction of the tetraketide portion of preaustinoid A3 by ausJ lead to the formation of preaustinoid A4. The aldo-keto reductase ausK, with the help of ausH, is involved in the next step by transforming preaustinoid A4 into isoaustinone which is in turn hydroxylated by the P450 monooxygenase ausI to form austinolide. Finally, the cytochrome P450 monooxygenase ausG modifies austinolide to austinol. Austinol can be further modified to dehydroaustinol which forms a diffusible complex with diorcinol that initiates conidiation. Due to genetic rearrangements of the clusters and the subsequent loss of some enzymes, the end products of the Emericella nidulans austinoid biosynthesis clusters are austinol and dehydroaustinol, even if additional enzymes, such as the O-acetyltransferase ausQ and the cytochrome P450 monooxygenase ausR are still functional. This chain is Terpene cyclase ausL, found in Emericella nidulans (strain FGSC A4 / ATCC 38163 / CBS 112.46 / NRRL 194 / M139) (Aspergillus nidulans).